We begin with the raw amino-acid sequence, 320 residues long: ATP-dependent 6-phosphofructokinase (320 aa).

Residue Gly-12 coordinates ATP. 22 to 26 (RGVVR) is an ADP binding site. Residues 73 to 74 (RF) and 103 to 106 (GDGS) each bind ATP. Position 104 (Asp-104) interacts with Mg(2+). 126–128 (TID) serves as a coordination point for substrate. The active-site Proton acceptor is Asp-128. Arg-155 contributes to the ADP binding site. Residues Arg-163 and 170–172 (MGR) contribute to the substrate site. Residues 186 to 188 (GCE), Lys-212, and 214 to 216 (KKH) each bind ADP. Residues Glu-223, Arg-244, and 250 to 253 (HIQR) contribute to the substrate site.

It belongs to the phosphofructokinase type A (PFKA) family. ATP-dependent PFK group I subfamily. Prokaryotic clade 'B1' sub-subfamily. As to quaternary structure, homotetramer. It depends on Mg(2+) as a cofactor.

Its subcellular location is the cytoplasm. It catalyses the reaction beta-D-fructose 6-phosphate + ATP = beta-D-fructose 1,6-bisphosphate + ADP + H(+). Its pathway is carbohydrate degradation; glycolysis; D-glyceraldehyde 3-phosphate and glycerone phosphate from D-glucose: step 3/4. Its activity is regulated as follows. Allosterically activated by ADP and other diphosphonucleosides, and allosterically inhibited by phosphoenolpyruvate. Functionally, catalyzes the phosphorylation of D-fructose 6-phosphate to fructose 1,6-bisphosphate by ATP, the first committing step of glycolysis. This Aliivibrio fischeri (strain ATCC 700601 / ES114) (Vibrio fischeri) protein is ATP-dependent 6-phosphofructokinase.